The following is a 347-amino-acid chain: GTPase Obg (347 aa).

The Obg domain maps to 1–159 (MKFVDEATIK…RVLRLELKLL (159 aa)). The interval 127–146 (NTRYKTSTNRAPRQSKPGTP) is disordered. Over residues 129–138 (RYKTSTNRAP) the composition is skewed to polar residues. The 175-residue stretch at 160–334 (ADVGLLGLPN…LMQAIMKYLE (175 aa)) folds into the OBG-type G domain. GTP contacts are provided by residues 166 to 173 (GLPNAGKS), 191 to 195 (FTTLY), 213 to 216 (DIPG), 284 to 287 (NKID), and 315 to 317 (SAA). Mg(2+) contacts are provided by serine 173 and threonine 193.

It belongs to the TRAFAC class OBG-HflX-like GTPase superfamily. OBG GTPase family. As to quaternary structure, monomer. Mg(2+) is required as a cofactor.

It localises to the cytoplasm. Its function is as follows. An essential GTPase which binds GTP, GDP and possibly (p)ppGpp with moderate affinity, with high nucleotide exchange rates and a fairly low GTP hydrolysis rate. Plays a role in control of the cell cycle, stress response, ribosome biogenesis and in those bacteria that undergo differentiation, in morphogenesis control. This chain is GTPase Obg, found in Thioalkalivibrio sulfidiphilus (strain HL-EbGR7).